We begin with the raw amino-acid sequence, 222 residues long: Small ribosomal subunit protein eS1 (222 aa).

It belongs to the eukaryotic ribosomal protein eS1 family.

The chain is Small ribosomal subunit protein eS1 from Methanocaldococcus jannaschii (strain ATCC 43067 / DSM 2661 / JAL-1 / JCM 10045 / NBRC 100440) (Methanococcus jannaschii).